The primary structure comprises 218 residues: Large ribosomal subunit protein uL3 (218 aa).

N5-methylglutamine is present on glutamine 153.

Belongs to the universal ribosomal protein uL3 family. Part of the 50S ribosomal subunit. Forms a cluster with proteins L14 and L19. Post-translationally, methylated by PrmB.

One of the primary rRNA binding proteins, it binds directly near the 3'-end of the 23S rRNA, where it nucleates assembly of the 50S subunit. This chain is Large ribosomal subunit protein uL3, found in Alkalilimnicola ehrlichii (strain ATCC BAA-1101 / DSM 17681 / MLHE-1).